The following is a 308-amino-acid chain: Ribosomal RNA large subunit methyltransferase F (308 aa).

Belongs to the methyltransferase superfamily. METTL16/RlmF family.

It is found in the cytoplasm. The enzyme catalyses adenosine(1618) in 23S rRNA + S-adenosyl-L-methionine = N(6)-methyladenosine(1618) in 23S rRNA + S-adenosyl-L-homocysteine + H(+). In terms of biological role, specifically methylates the adenine in position 1618 of 23S rRNA. The protein is Ribosomal RNA large subunit methyltransferase F of Escherichia coli O157:H7.